We begin with the raw amino-acid sequence, 1070 residues long: DNA-directed RNA polymerase subunit beta (1070 aa).

Belongs to the RNA polymerase beta chain family. In terms of assembly, in plastids the minimal PEP RNA polymerase catalytic core is composed of four subunits: alpha, beta, beta', and beta''. When a (nuclear-encoded) sigma factor is associated with the core the holoenzyme is formed, which can initiate transcription.

Its subcellular location is the plastid. It is found in the chloroplast. It carries out the reaction RNA(n) + a ribonucleoside 5'-triphosphate = RNA(n+1) + diphosphate. DNA-dependent RNA polymerase catalyzes the transcription of DNA into RNA using the four ribonucleoside triphosphates as substrates. This Buxus microphylla (Littleleaf boxwood) protein is DNA-directed RNA polymerase subunit beta.